A 344-amino-acid polypeptide reads, in one-letter code: Ribosomal RNA large subunit methyltransferase Cfr (344 aa).

Glu-90 (proton acceptor) is an active-site residue. Residues 97–330 (KQGWESFCIS…ATVRTQFGSE (234 aa)) enclose the Radical SAM core domain. The cysteines at positions 104 and 335 are disulfide-linked. [4Fe-4S] cluster contacts are provided by Cys-111, Cys-115, and Cys-118. Residues 157 to 158 (GE), Ser-188, 211 to 213 (SLH), and Asn-292 each bind S-adenosyl-L-methionine. The active-site S-methylcysteine intermediate is Cys-335.

The protein belongs to the radical SAM superfamily. RlmN family. Cfr subfamily. [4Fe-4S] cluster is required as a cofactor.

It is found in the cytoplasm. The enzyme catalyses adenosine(2503) in 23S rRNA + 2 reduced [2Fe-2S]-[ferredoxin] + 2 S-adenosyl-L-methionine = 8-methyladenosine(2503) in 23S rRNA + 5'-deoxyadenosine + L-methionine + 2 oxidized [2Fe-2S]-[ferredoxin] + S-adenosyl-L-homocysteine. Its function is as follows. Specifically methylates position 8 of adenine 2503 in 23S rRNA. Confers resistance to some classes of antibiotics. This is Ribosomal RNA large subunit methyltransferase Cfr from Clostridium botulinum (strain Loch Maree / Type A3).